Consider the following 379-residue polypeptide: NADH-rubredoxin oxidoreductase (379 aa).

Cystine bridges form between Cys-26–Cys-286 and Cys-137–Cys-216. FAD contacts are provided by residues 33–35 (NSE), Arg-42, Ala-79, and Tyr-125. FAD is bound at residue Asp-259.

The protein belongs to the FAD-dependent oxidoreductase family. In terms of assembly, monomer. The cofactor is FAD.

It catalyses the reaction 2 reduced [rubredoxin] + NAD(+) + H(+) = 2 oxidized [rubredoxin] + NADH. Catalyzes the NADH-dependent reduction of rubredoxin (Rd). NADPH is a very poor electron donor compared to NADH. Functions as an intermediate component in the electron transfer chain: NADH-&gt;NROR-&gt;Rd-&gt;FprA1/2. Also functions as an intermediate component in the electron transfer chains from NADH to revRbr and Dfx. Therefore, is a key electron carrier in an efficient multienzyme complex that can scavenge O(2) and reactive oxygen species (ROS), and thus plays an important role in the oxidative stress defense system in C.acetobutylicum, an obligate anaerobic bacterium. This chain is NADH-rubredoxin oxidoreductase (nroR), found in Clostridium acetobutylicum (strain ATCC 824 / DSM 792 / JCM 1419 / IAM 19013 / LMG 5710 / NBRC 13948 / NRRL B-527 / VKM B-1787 / 2291 / W).